Reading from the N-terminus, the 480-residue chain is Thiamine biosynthesis bifunctional protein ThiM/ThiE (480 aa).

Residues 1–287 are hydroxyethylthiazole kinase; the sequence is MSTLPERVRE…LYVLVSGATP (287 aa). Met40 contacts 5-(2-hydroxyethyl)-4-methylthiazole. The ATP site is built by Arg116 and Thr164. Gly191 serves as a coordination point for 5-(2-hydroxyethyl)-4-methylthiazole. A thiamine-phosphate synthase region spans residues 288–480; the sequence is PDVLEAVLQA…VRRAKGEVSA (193 aa). Residues 303–307 and Asn335 contribute to the 4-amino-2-methyl-5-(diphosphooxymethyl)pyrimidine site; that span reads QFREK. Residues Asp336 and Asp355 each coordinate Mg(2+). 4-amino-2-methyl-5-(diphosphooxymethyl)pyrimidine is bound at residue Thr374. 400-402 provides a ligand contact to 2-[(2R,5Z)-2-carboxy-4-methylthiazol-5(2H)-ylidene]ethyl phosphate; the sequence is TPS. Lys403 is a binding site for 4-amino-2-methyl-5-(diphosphooxymethyl)pyrimidine. Residues Gly431 and 451-452 contribute to the 2-[(2R,5Z)-2-carboxy-4-methylthiazol-5(2H)-ylidene]ethyl phosphate site; that span reads IS.

The protein in the N-terminal section; belongs to the Thz kinase family. This sequence in the C-terminal section; belongs to the thiamine-phosphate synthase family. Mg(2+) is required as a cofactor.

It catalyses the reaction 5-(2-hydroxyethyl)-4-methylthiazole + ATP = 4-methyl-5-(2-phosphooxyethyl)-thiazole + ADP + H(+). The catalysed reaction is 2-[(2R,5Z)-2-carboxy-4-methylthiazol-5(2H)-ylidene]ethyl phosphate + 4-amino-2-methyl-5-(diphosphooxymethyl)pyrimidine + 2 H(+) = thiamine phosphate + CO2 + diphosphate. It carries out the reaction 2-(2-carboxy-4-methylthiazol-5-yl)ethyl phosphate + 4-amino-2-methyl-5-(diphosphooxymethyl)pyrimidine + 2 H(+) = thiamine phosphate + CO2 + diphosphate. The enzyme catalyses 4-methyl-5-(2-phosphooxyethyl)-thiazole + 4-amino-2-methyl-5-(diphosphooxymethyl)pyrimidine + H(+) = thiamine phosphate + diphosphate. The protein operates within cofactor biosynthesis; thiamine diphosphate biosynthesis; 4-methyl-5-(2-phosphoethyl)-thiazole from 5-(2-hydroxyethyl)-4-methylthiazole: step 1/1. Its pathway is cofactor biosynthesis; thiamine diphosphate biosynthesis; thiamine phosphate from 4-amino-2-methyl-5-diphosphomethylpyrimidine and 4-methyl-5-(2-phosphoethyl)-thiazole: step 1/1. Its function is as follows. Condenses 4-methyl-5-(beta-hydroxyethyl)thiazole monophosphate (THZ-P) and 2-methyl-4-amino-5-hydroxymethyl pyrimidine pyrophosphate (HMP-PP) to form thiamine monophosphate (TMP). This chain is Thiamine biosynthesis bifunctional protein ThiM/ThiE (thiM/thiE), found in Symbiobacterium thermophilum (strain DSM 24528 / JCM 14929 / IAM 14863 / T).